A 232-amino-acid polypeptide reads, in one-letter code: Phosphoadenosine 5'-phosphosulfate reductase (232 aa).

C228 (nucleophile; cysteine thiosulfonate intermediate) is an active-site residue.

It belongs to the PAPS reductase family. CysH subfamily.

It is found in the cytoplasm. The enzyme catalyses [thioredoxin]-disulfide + sulfite + adenosine 3',5'-bisphosphate + 2 H(+) = [thioredoxin]-dithiol + 3'-phosphoadenylyl sulfate. The protein operates within sulfur metabolism; hydrogen sulfide biosynthesis; sulfite from sulfate: step 3/3. Functionally, catalyzes the formation of sulfite from phosphoadenosine 5'-phosphosulfate (PAPS) using thioredoxin as an electron donor. In Synechococcus sp. (strain ATCC 27144 / PCC 6301 / SAUG 1402/1) (Anacystis nidulans), this protein is Phosphoadenosine 5'-phosphosulfate reductase.